A 1138-amino-acid chain; its full sequence is Pesticidal crystal protein Cry7Ab (1138 aa).

It belongs to the delta endotoxin family.

In terms of biological role, promotes colloidosmotic lysis by binding to the midgut epithelial cells of Coleoptera. The sequence is that of Pesticidal crystal protein Cry7Ab (cry7Ab) from Bacillus thuringiensis subsp. dakota.